The primary structure comprises 274 residues: Putative ABC transporter ATP-binding protein MM_1037 (274 aa).

In terms of domain architecture, ABC transporter spans 2–235 (IRLENVSYCY…PSLKDLGLTP (234 aa)). Residue 35–42 (GRNGSGKS) participates in ATP binding.

Belongs to the ABC transporter superfamily.

It is found in the cell membrane. Probably part of an ABC transporter complex. Responsible for energy coupling to the transport system. This Methanosarcina mazei (strain ATCC BAA-159 / DSM 3647 / Goe1 / Go1 / JCM 11833 / OCM 88) (Methanosarcina frisia) protein is Putative ABC transporter ATP-binding protein MM_1037.